A 223-amino-acid chain; its full sequence is 7-cyano-7-deazaguanine synthase (223 aa).

Residue 15–25 participates in ATP binding; sequence FSGGQDSTTCL. Zn(2+) contacts are provided by C191, C200, C203, and C206.

Belongs to the QueC family. As to quaternary structure, homodimer. Zn(2+) is required as a cofactor.

The catalysed reaction is 7-carboxy-7-deazaguanine + NH4(+) + ATP = 7-cyano-7-deazaguanine + ADP + phosphate + H2O + H(+). It functions in the pathway purine metabolism; 7-cyano-7-deazaguanine biosynthesis. Its function is as follows. Catalyzes the ATP-dependent conversion of 7-carboxy-7-deazaguanine (CDG) to 7-cyano-7-deazaguanine (preQ(0)). In Staphylococcus epidermidis (strain ATCC 35984 / DSM 28319 / BCRC 17069 / CCUG 31568 / BM 3577 / RP62A), this protein is 7-cyano-7-deazaguanine synthase.